Reading from the N-terminus, the 478-residue chain is MLLWVQQALLALLLPTLLAQGEARRSRNTTRPALLRLSDYLLTNYRKGVRPVRDWRKPTTVSIDVIVYAILNVDEKNQVLTTYIWYRQYWTDEFLQWNPEDFDNITKLSIPTDSIWVPDILINEFVDVGKSPNIPYVYIRHQGEVQNYKPLQVVTACSLDIYNFPFDVQNCSLTFTSWLHTIQDINISLWRLPEKVKSDRSVFMNQGEWELLGVLPYFREFSMESSNYYAEMKFYVVIRRRPLFYVVSLLLPSIFLMVMDIVGFYLPPNSGERVSFKITLLLGYSVFLIIVSDTLPATAIGTPLIGVYFVVCMALLVISLAETIFIVRLVHKQDLQQPVPAWLRHLVLERIAWLLCLREQSTSQRPPATSQATKTDDCSAMGNHCSHMGGPQDFEKSPRDRCSPPPPPREASLAVCGLLQELSSIRQFLEKRDEIREVARDWLRVGSVLDKLLFHIYLLAVLAYSITLVMLWSIWQYA.

The first 23 residues, Met1 to Ala23, serve as a signal peptide directing secretion. Residues Arg24–Arg241 are Extracellular-facing. 4 N-linked (GlcNAc...) asparagine glycosylation sites follow: Asn28, Asn104, Asn170, and Asn186. Cysteines 157 and 171 form a disulfide. The helical transmembrane segment at Pro242–Pro268 threads the bilayer. Over Asn269–Arg273 the chain is Cytoplasmic. The chain crosses the membrane as a helical span at residues Val274–Ser292. At Asp293–Thr302 the chain is on the extracellular side. The helical transmembrane segment at Pro303–Ala321 threads the bilayer. Residues Glu322–His455 lie on the Cytoplasmic side of the membrane. The tract at residues Gly389–Pro408 is disordered. Positions Asp393–Cys402 are enriched in basic and acidic residues. The tract at residues Ala414–Asp450 is HA-stretch; determines single-channel conductance in 5-HT3 receptors. Residues Ile456–Trp475 form a helical membrane-spanning segment. At Gln476 to Ala478 the chain is on the extracellular side.

It belongs to the ligand-gated ion channel (TC 1.A.9) family. 5-hydroxytryptamine receptor (TC 1.A.9.2) subfamily. HTR3A sub-subfamily. In terms of assembly, forms homopentameric as well as heteropentameric serotonin-activated cation-selective channel complexes with HTR3B or HTR3C or HTR3D or HTR3E. The homomeric complex is functional but exhibits low conductance with modified voltage dependence, and decreased agonist and antagonist affinity. Heteropentameric complexes display properties which resemble that of neuronal serotonin-activated channels in vivo. Interacts with RIC3. As to expression, expressed in cerebral cortex, amygdala, hippocampus, and testis. Detected in monocytes of the spleen and tonsil, in small and large intestine, uterus, prostate, ovary and placenta.

It localises to the postsynaptic cell membrane. Its subcellular location is the cell membrane. The enzyme catalyses Na(+)(in) = Na(+)(out). It carries out the reaction K(+)(in) = K(+)(out). It catalyses the reaction Ca(2+)(in) = Ca(2+)(out). The catalysed reaction is Mg(2+)(in) = Mg(2+)(out). In terms of biological role, forms serotonin (5-hydroxytryptamine/5-HT3)-activated cation-selective channel complexes, which when activated cause fast, depolarizing responses in neurons. This is 5-hydroxytryptamine receptor 3A from Homo sapiens (Human).